The primary structure comprises 720 residues: Collectin-12 (720 aa).

The Cytoplasmic portion of the chain corresponds to 1-37; it reads MKDDFNDEEEVQSFGYKRFGIQEGNECTKCKNDWALR. Residues 38 to 58 form a helical; Signal-anchor for type II membrane protein membrane-spanning segment; it reads VAIALLYVLCALLTIAVAVLG. At 59–720 the chain is on the extracellular side; that stretch reads YKVVQRMDNV…RTNESKVPVL (662 aa). 3 coiled-coil regions span residues 95-120, 216-267, and 377-408; these read EKSE…QLSD, ISSL…LAAN, and LHGL…LDKE. The tract at residues 433 to 576 is disordered; it reads FTILQGPPGP…GPPGLPGLPA (144 aa). Collagen-like domains follow at residues 444-503 and 510-569; these read GPRG…PGPK and GRQG…PGPP. Over residues 460 to 479 the composition is skewed to basic and acidic residues; it reads PKGEKGEKGAPGDAGPKGEK. Residues 488–503 show a composition bias toward low complexity; that stretch reads PGLKGPPGSRGSPGPK. A compositionally biased stretch (gly residues) spans 504–513; the sequence is GSRGSGGRQG. The segment covering 527–560 has biased composition (low complexity); the sequence is PGRDGQPGPTGPQGPQGLRGPAGPAGLEGARGPV. The span at 562–576 shows a compositional bias: pro residues; sequence PIGPPGPPGLPGLPA. 3 cysteine pairs are disulfide-bonded: Cys-604/Cys-615, Cys-634/Cys-709, and Cys-687/Cys-701. A C-type lectin domain is found at 611–710; it reads FREQCYHFSA…CTERIGFICE (100 aa). Residues Ile-643, Asn-645, and Glu-649 each contribute to the Ca(2+) site. A carbohydrate contacts are provided by Lys-670, Gln-673, and Asp-675. Residues Gln-673, Asp-675, Asn-676, Glu-685, Asp-686, Asn-697, Asp-698, and Glu-710 each contribute to the Ca(2+) site. Residue Glu-685 participates in a carbohydrate binding. A carbohydrate contacts are provided by Asn-697 and Asp-698.

Its subcellular location is the membrane. Its function is as follows. Scavenger receptor that displays several functions associated with host defense. Binds to carbohydrates. The protein is Collectin-12 (colec12) of Danio rerio (Zebrafish).